The primary structure comprises 433 residues: ATP-dependent protease ATPase subunit HslU (433 aa).

ATP contacts are provided by residues Val18, 60–65 (GVGKTE), Asp246, Glu311, and Arg383.

This sequence belongs to the ClpX chaperone family. HslU subfamily. A double ring-shaped homohexamer of HslV is capped on each side by a ring-shaped HslU homohexamer. The assembly of the HslU/HslV complex is dependent on binding of ATP.

Its subcellular location is the cytoplasm. Functionally, ATPase subunit of a proteasome-like degradation complex; this subunit has chaperone activity. The binding of ATP and its subsequent hydrolysis by HslU are essential for unfolding of protein substrates subsequently hydrolyzed by HslV. HslU recognizes the N-terminal part of its protein substrates and unfolds these before they are guided to HslV for hydrolysis. This is ATP-dependent protease ATPase subunit HslU from Rhodopseudomonas palustris (strain ATCC BAA-98 / CGA009).